A 108-amino-acid chain; its full sequence is Large ribosomal subunit protein uL23 (108 aa).

This sequence belongs to the universal ribosomal protein uL23 family. Part of the 50S ribosomal subunit. Contacts protein L29, and trigger factor when it is bound to the ribosome.

Its function is as follows. One of the early assembly proteins it binds 23S rRNA. One of the proteins that surrounds the polypeptide exit tunnel on the outside of the ribosome. Forms the main docking site for trigger factor binding to the ribosome. The sequence is that of Large ribosomal subunit protein uL23 from Polaromonas naphthalenivorans (strain CJ2).